Consider the following 483-residue polypeptide: tRNA-2-methylthio-N(6)-dimethylallyladenosine synthase (483 aa).

One can recognise an MTTase N-terminal domain in the interval 31–148 (KKLYIETQGC…LPQMLDQHQD (118 aa)). [4Fe-4S] cluster-binding residues include cysteine 40, cysteine 77, cysteine 111, cysteine 192, cysteine 196, and cysteine 199. The 233-residue stretch at 178–410 (RVEGFKAFVS…QHWIKQSSIR (233 aa)) folds into the Radical SAM core domain. Positions 413-477 (DAMQGTIQRV…LNLVYGELLN (65 aa)) constitute a TRAM domain.

This sequence belongs to the methylthiotransferase family. MiaB subfamily. Monomer. The cofactor is [4Fe-4S] cluster.

Its subcellular location is the cytoplasm. It catalyses the reaction N(6)-dimethylallyladenosine(37) in tRNA + (sulfur carrier)-SH + AH2 + 2 S-adenosyl-L-methionine = 2-methylsulfanyl-N(6)-dimethylallyladenosine(37) in tRNA + (sulfur carrier)-H + 5'-deoxyadenosine + L-methionine + A + S-adenosyl-L-homocysteine + 2 H(+). Catalyzes the methylthiolation of N6-(dimethylallyl)adenosine (i(6)A), leading to the formation of 2-methylthio-N6-(dimethylallyl)adenosine (ms(2)i(6)A) at position 37 in tRNAs that read codons beginning with uridine. This Acinetobacter baylyi (strain ATCC 33305 / BD413 / ADP1) protein is tRNA-2-methylthio-N(6)-dimethylallyladenosine synthase.